Reading from the N-terminus, the 221-residue chain is Pyridoxine/pyridoxamine 5'-phosphate oxidase (221 aa).

Residues 14–17 (RNEY) and K73 contribute to the substrate site. Residues 68 to 73 (RTVLLK), 83 to 84 (FT), K90, and Q112 contribute to the FMN site. 3 residues coordinate substrate: Y130, R134, and S138. Residues 147-148 (QS) and W193 each bind FMN. 199–201 (RLH) is a binding site for substrate. Position 203 (R203) interacts with FMN.

Belongs to the pyridoxamine 5'-phosphate oxidase family. In terms of assembly, homodimer. FMN serves as cofactor.

The enzyme catalyses pyridoxamine 5'-phosphate + O2 + H2O = pyridoxal 5'-phosphate + H2O2 + NH4(+). It catalyses the reaction pyridoxine 5'-phosphate + O2 = pyridoxal 5'-phosphate + H2O2. The protein operates within cofactor metabolism; pyridoxal 5'-phosphate salvage; pyridoxal 5'-phosphate from pyridoxamine 5'-phosphate: step 1/1. It participates in cofactor metabolism; pyridoxal 5'-phosphate salvage; pyridoxal 5'-phosphate from pyridoxine 5'-phosphate: step 1/1. Functionally, catalyzes the oxidation of either pyridoxine 5'-phosphate (PNP) or pyridoxamine 5'-phosphate (PMP) into pyridoxal 5'-phosphate (PLP). The polypeptide is Pyridoxine/pyridoxamine 5'-phosphate oxidase (Salinispora arenicola (strain CNS-205)).